A 188-amino-acid polypeptide reads, in one-letter code: Archaemetzincin (188 aa).

H137 contributes to the Zn(2+) binding site. Residue E138 is the Proton acceptor of the active site. Residues H141, H147, C148, C153, C172, and C175 each contribute to the Zn(2+) site.

The protein belongs to the peptidase M54 family. As to quaternary structure, monomer. Zn(2+) is required as a cofactor.

Probable zinc metalloprotease whose natural substrate is unknown. The protein is Archaemetzincin of Pyrococcus horikoshii (strain ATCC 700860 / DSM 12428 / JCM 9974 / NBRC 100139 / OT-3).